The following is a 236-amino-acid chain: Syntaxin-8 (236 aa).

Topologically, residues 1–215 are cytoplasmic; the sequence is MAPDPWFSTY…LVDRKSASCG (215 aa). Residues 42–65 are a coiled coil; that stretch reads LTIRTLLKNLKVKIDLLKDLLLRA. Residues Ser-102 and Ser-160 each carry the phosphoserine modification. The t-SNARE coiled-coil homology domain occupies 145–207; sequence QKIIQEQDAG…RTEARRVTLV (63 aa). Residues 216-232 traverse the membrane as a helical; Anchor for type IV membrane protein segment; sequence MIMVILLLLVAIVVVAV. The Vesicular portion of the chain corresponds to 233–236; that stretch reads WPTN.

It belongs to the syntaxin family. In terms of assembly, part of the SNARE core complex containing STX7, VAMP8 and VTI1B. Interacts with VAMP8. Forms a SNARE complex with STX7, VTI1B and VAMP8 which functions in the homotypic fusion of late endosomes. Component of the SNARE complex composed of STX7, STX8, VAMP7 and VTI1B that is required for heterotypic fusion of late endosomes with lysosomes. Interacts with HECTD3. Interacts with TPC1. Ubiquitinated by HECTD3. In terms of tissue distribution, widely expressed in all tissues examined.

It is found in the membrane. Its function is as follows. Vesicle trafficking protein that functions in the early secretory pathway, possibly by mediating retrograde transport from cis-Golgi membranes to the ER. The chain is Syntaxin-8 (Stx8) from Rattus norvegicus (Rat).